We begin with the raw amino-acid sequence, 636 residues long: Zinc finger protein 90 (636 aa).

Residues 14–85 (VTFKDVAVNF…EKEIQRPFCP (72 aa)) form the KRAB domain. 7 consecutive C2H2-type zinc fingers follow at residues 208 to 230 (YKCD…EKIH), 250 to 272 (HECA…QRIH), 278 to 300 (FECN…ENAH), 306 to 328 (YQCS…QRIH), 334 to 356 (YRCN…EVTH), 362 to 384 (FQCK…ERTH), and 390 to 412 (FECS…MRIH). Residues 227–247 (EKIHKGDPYSNGTDQGAQSGR) are disordered. A Glycyl lysine isopeptide (Lys-Gly) (interchain with G-Cter in SUMO2) cross-link involves residue Lys-444. 6 C2H2-type zinc fingers span residues 446–468 (YHCN…QRLH), 494–516 (YQCN…HRIH), 522–544 (YECN…ERTH), 550–572 (YECI…ERTH), 578–600 (YECN…QRTH), and 606–628 (YACK…HRVH).

It belongs to the krueppel C2H2-type zinc-finger protein family. In terms of assembly, interacts (via N- and C-termini) with REST (via zinc-finger DNA-binding domain); the interaction inhibits REST repressor activity. As to expression, brain, spleen, thymus, and testis. Expressed in heart.

The protein localises to the nucleus. Its function is as follows. Inhibits the transcriptional repressor activity of REST by inhibiting its binding to DNA, thereby derepressing transcription of REST target genes. This is Zinc finger protein 90 (Zfp90) from Mus musculus (Mouse).